Consider the following 290-residue polypeptide: Lipoyl synthase (290 aa).

[4Fe-4S] cluster contacts are provided by cysteine 36, cysteine 41, cysteine 47, cysteine 62, cysteine 66, cysteine 69, and serine 275. Positions 48 to 264 (FSKKTATFMI…KEEALKIGFS (217 aa)) constitute a Radical SAM core domain.

The protein belongs to the radical SAM superfamily. Lipoyl synthase family. Requires [4Fe-4S] cluster as cofactor.

The protein resides in the cytoplasm. The enzyme catalyses [[Fe-S] cluster scaffold protein carrying a second [4Fe-4S](2+) cluster] + N(6)-octanoyl-L-lysyl-[protein] + 2 oxidized [2Fe-2S]-[ferredoxin] + 2 S-adenosyl-L-methionine + 4 H(+) = [[Fe-S] cluster scaffold protein] + N(6)-[(R)-dihydrolipoyl]-L-lysyl-[protein] + 4 Fe(3+) + 2 hydrogen sulfide + 2 5'-deoxyadenosine + 2 L-methionine + 2 reduced [2Fe-2S]-[ferredoxin]. Its pathway is protein modification; protein lipoylation via endogenous pathway; protein N(6)-(lipoyl)lysine from octanoyl-[acyl-carrier-protein]: step 2/2. Functionally, catalyzes the radical-mediated insertion of two sulfur atoms into the C-6 and C-8 positions of the octanoyl moiety bound to the lipoyl domains of lipoate-dependent enzymes, thereby converting the octanoylated domains into lipoylated derivatives. The sequence is that of Lipoyl synthase from Alkaliphilus metalliredigens (strain QYMF).